A 146-amino-acid polypeptide reads, in one-letter code: D-aminoacyl-tRNA deacylase (146 aa).

The Gly-cisPro motif, important for rejection of L-amino acids motif lies at 137 to 138 (GP).

The protein belongs to the DTD family. As to quaternary structure, homodimer.

It localises to the cytoplasm. The catalysed reaction is glycyl-tRNA(Ala) + H2O = tRNA(Ala) + glycine + H(+). It carries out the reaction a D-aminoacyl-tRNA + H2O = a tRNA + a D-alpha-amino acid + H(+). Its function is as follows. An aminoacyl-tRNA editing enzyme that deacylates mischarged D-aminoacyl-tRNAs. Also deacylates mischarged glycyl-tRNA(Ala), protecting cells against glycine mischarging by AlaRS. Acts via tRNA-based rather than protein-based catalysis; rejects L-amino acids rather than detecting D-amino acids in the active site. By recycling D-aminoacyl-tRNA to D-amino acids and free tRNA molecules, this enzyme counteracts the toxicity associated with the formation of D-aminoacyl-tRNA entities in vivo and helps enforce protein L-homochirality. The polypeptide is D-aminoacyl-tRNA deacylase (Cellvibrio japonicus (strain Ueda107) (Pseudomonas fluorescens subsp. cellulosa)).